The following is a 324-amino-acid chain: BURP domain-containing protein 5 (324 aa).

Positions methionine 1–alanine 30 are cleaved as a signal peptide. One can recognise a BURP domain in the interval phenylalanine 109 to arginine 323.

In terms of tissue distribution, expressed in panicles.

The protein is BURP domain-containing protein 5 (BURP5) of Oryza sativa subsp. japonica (Rice).